The chain runs to 132 residues: Small ribosomal subunit protein uS8 (132 aa).

The protein belongs to the universal ribosomal protein uS8 family. Part of the 30S ribosomal subunit. Contacts proteins S5 and S12.

In terms of biological role, one of the primary rRNA binding proteins, it binds directly to 16S rRNA central domain where it helps coordinate assembly of the platform of the 30S subunit. In Caldanaerobacter subterraneus subsp. tengcongensis (strain DSM 15242 / JCM 11007 / NBRC 100824 / MB4) (Thermoanaerobacter tengcongensis), this protein is Small ribosomal subunit protein uS8 (rpsH).